The chain runs to 961 residues: MAGGTGCVRLWGAARCWTLRRPLLAAAGGRVPTAARAWLPRGRRACDASPPWALWGQSPAAAGHWRGLWEANNRSGGGAFSGGEDASEGGAEDGASGVGGSAGGGEGPVITALTPMMIPDVFPHLPLIAVTRNPVFPRFIKIVEVKNKKLVELLRRKVHLAQPYAGVFLKKDDNNESDVVENLDEIYHTGTFVQIHEMQDLGDKLRMIVMGHRRVHINRQLEVEPEEPEGENKQKLRKKPKRGKKEAEEDGATKRPLEVVVGPGPSPAGEVLMVEVENVAHEDFQVTEEVKALTAEIVKTIRDIIALNPLYRESVLQMMQAGHRVVDNPIYLSDMGAALTGAESHELQEVLEETNIPKRLYKALSLLKKEFELSKLQQRLGREVEEKIKQTHRKYLLQEQLKIIKKELGLEKDDKDAIEEKFRERLKELVVPKHVMDVVDEELSKLGLLDNHSSEFNVTRNYLDWLTSIPWGKHSDENLDLARAQAVLEEDHYGMEDVKKRILEFIAVSQLRGSTQGKILCFYGPPGVGKTSIARSIARALNREYFRFSVGGMTDVAEIKGHRRTYVGAMPGKIIQCLKKTKTENPLVLIDEVDKIGRGYQGDPSSALLELLDPEQNANFLDHYLDVPVDLSKVLFICTANITETIPEPLRDRMEMINVSGYVAQEKLAIAERYLVPQARALCGLDESKAKLSSDVLTLLIKQYCRESGVRNLQKQVEKVLRKSAYKIVSGEAEFVEVTPENLQDFVGKPVFTVERMYDVTPPGVVMGLAWTAMGGSTLFVETSLRRPRDRDSDKGDKDGSLEVTGQLGEVMKESARIAYTFARAFLMQHDSANKFLVTSHIHLHVPEGATPKDGPSAGCTIVTALLSLALDRPVRQNLAMTGEVSLTGKVLPVGGIKEKTIAAKRAGVTCIVLPAENKKDFYDLAAFITEGLEVHFVEHYREIFDIAFPEERAEALAVER.

Residues 1-67 constitute a mitochondrion transit peptide; the sequence is MAGGTGCVRL…SPAAAGHWRG (67 aa). Disordered stretches follow at residues 76 to 103 and 220 to 262; these read GGGA…GSAG and QLEV…VVVG. One can recognise a Lon N-terminal domain in the interval 125-371; it reads LPLIAVTRNP…KALSLLKKEF (247 aa). The span at 235–244 shows a compositional bias: basic residues; it reads KLRKKPKRGK. The segment covering 245–257 has biased composition (basic and acidic residues); it reads KEAEEDGATKRPL. 524 to 531 provides a ligand contact to ATP; sequence GPPGVGKT. Residues 760 to 951 form the Lon proteolytic domain; the sequence is VTPPGVVMGL…REIFDIAFPE (192 aa). A compositionally biased stretch (basic and acidic residues) spans 784–801; the sequence is SLRRPRDRDSDKGDKDGS. A disordered region spans residues 784–803; it reads SLRRPRDRDSDKGDKDGSLE. Catalysis depends on residues Ser-857 and Lys-900.

Belongs to the peptidase S16 family. As to quaternary structure, homohexamer. Organized in a ring with a central cavity. The ATP-binding and proteolytic domains (AP-domain) form a hexameric chamber, while the N-terminal domain is arranged as a trimer of dimers. DNA and RNA binding is stimulated by substrate and inhibited by ATP binding. Interacts with TWNK and mitochondrial DNA polymerase subunit POLG.

Its subcellular location is the mitochondrion matrix. It carries out the reaction Hydrolysis of proteins in presence of ATP.. ATP-dependent serine protease that mediates the selective degradation of misfolded, unassembled or oxidatively damaged polypeptides as well as certain short-lived regulatory proteins in the mitochondrial matrix. Endogenous substrates include mitochondrial steroidogenic acute regulatory (StAR) protein, DELE1, helicase Twinkle (TWNK) and the large ribosomal subunit protein MRPL32/bL32m. MRPL32/bL32m is protected from degradation by LONP1 when it is bound to a nucleic acid (RNA), but TWNK is not. May also have a chaperone function in the assembly of inner membrane protein complexes. Participates in the regulation of mitochondrial gene expression and in the maintenance of the integrity of the mitochondrial genome. Binds to mitochondrial promoters and RNA in a single-stranded, site-specific, and strand-specific manner. May regulate mitochondrial DNA replication and/or gene expression using site-specific, single-stranded DNA binding to target the degradation of regulatory proteins binding to adjacent sites in mitochondrial promoters. This Bos taurus (Bovine) protein is Lon protease homolog, mitochondrial.